Reading from the N-terminus, the 262-residue chain is Hydroxyethylthiazole kinase (262 aa).

Met-50 contributes to the substrate binding site. Residues Arg-125 and Thr-171 each contribute to the ATP site. Residue Gly-198 coordinates substrate.

It belongs to the Thz kinase family. Mg(2+) is required as a cofactor.

The enzyme catalyses 5-(2-hydroxyethyl)-4-methylthiazole + ATP = 4-methyl-5-(2-phosphooxyethyl)-thiazole + ADP + H(+). Its pathway is cofactor biosynthesis; thiamine diphosphate biosynthesis; 4-methyl-5-(2-phosphoethyl)-thiazole from 5-(2-hydroxyethyl)-4-methylthiazole: step 1/1. Its function is as follows. Catalyzes the phosphorylation of the hydroxyl group of 4-methyl-5-beta-hydroxyethylthiazole (THZ). The protein is Hydroxyethylthiazole kinase of Escherichia coli O45:K1 (strain S88 / ExPEC).